Reading from the N-terminus, the 1235-residue chain is DNA polymerase catalytic subunit (1235 aa).

Disordered regions lie at residues 640 to 691 (QGRF…ETAG) and 1098 to 1134 (AAAP…ASKP). Residues 650–661 (APKRPAAAREDE) show a composition bias toward basic and acidic residues. Positions 662–675 (ERPEEEGEDEDERE) are enriched in acidic residues. Positions 676 to 691 (EGGGEREPDGARETAG) are enriched in basic and acidic residues.

It belongs to the DNA polymerase type-B family. As to quaternary structure, forms a complex with the ssDNA-binding protein UL29, the DNA polymerase processivity factor, and the alkaline exonuclease. Interacts with the putative helicase-primase complex subunit UL8; this interaction may coordinate leading and lagging strand DNA synthesis at the replication fork.

Its subcellular location is the host nucleus. It catalyses the reaction DNA(n) + a 2'-deoxyribonucleoside 5'-triphosphate = DNA(n+1) + diphosphate. The enzyme catalyses Endonucleolytic cleavage to 5'-phosphomonoester.. In terms of biological role, replicates viral genomic DNA. The replication complex is composed of six viral proteins: the DNA polymerase, processivity factor, primase, primase-associated factor, helicase, and ssDNA-binding protein. Additionally, the polymerase contains an intrinsic ribonuclease H (RNase H) activity that specifically degrades RNA/DNA heteroduplexes or duplex DNA substrates in the 5' to 3' direction. Therefore, it can catalyze the excision of the RNA primers that initiate the synthesis of Okazaki fragments at a replication fork during viral DNA replication. The protein is DNA polymerase catalytic subunit of Homo sapiens (Human).